The sequence spans 364 residues: Anhydro-N-acetylmuramic acid kinase (364 aa).

12–19 provides a ligand contact to ATP; that stretch reads GTSHDAID.

This sequence belongs to the anhydro-N-acetylmuramic acid kinase family.

It carries out the reaction 1,6-anhydro-N-acetyl-beta-muramate + ATP + H2O = N-acetyl-D-muramate 6-phosphate + ADP + H(+). The protein operates within amino-sugar metabolism; 1,6-anhydro-N-acetylmuramate degradation. Its pathway is cell wall biogenesis; peptidoglycan recycling. Its function is as follows. Catalyzes the specific phosphorylation of 1,6-anhydro-N-acetylmuramic acid (anhMurNAc) with the simultaneous cleavage of the 1,6-anhydro ring, generating MurNAc-6-P. Is required for the utilization of anhMurNAc either imported from the medium or derived from its own cell wall murein, and thus plays a role in cell wall recycling. The sequence is that of Anhydro-N-acetylmuramic acid kinase from Gamma-proteobacterium EBAC31A08.